We begin with the raw amino-acid sequence, 276 residues long: uncharacterized protein (276 aa).

Residues 20 to 137 (PVLIFIPGAN…PPINTFLPDS (118 aa)) form the AB hydrolase-1 domain. Residues 57–76 (GESELTEPLPDSASNPDSDY) are disordered.

Belongs to the AB hydrolase superfamily.

This is an uncharacterized protein from Staphylococcus aureus (strain N315).